The chain runs to 670 residues: Proline-rich receptor-like protein kinase PERK5 (670 aa).

The tract at residues 1-181 is disordered; that stretch reads MADSPVDSSP…SGDSDSSSGN (181 aa). Residues 1-186 lie on the Extracellular side of the membrane; that stretch reads MADSPVDSSP…SSSGNHPQAN (186 aa). Over residues 14–31 the composition is skewed to low complexity; that stretch reads TSNGTPPSNGTSPSNESS. N-linked (GlcNAc...) asparagine glycans are attached at residues N22 and N28. Pro residues-rich tracts occupy residues 32–62 and 84–109; these read PPTP…PAPP and PQTP…PPQT. N-linked (GlcNAc...) asparagine glycosylation occurs at N130. Residues 132–141 are compositionally biased toward low complexity; the sequence is TNGGNNNRDG. N151 is a glycosylation site (N-linked (GlcNAc...) asparagine). Low complexity predominate over residues 167 to 181; sequence SPPQNSGDSDSSSGN. The chain crosses the membrane as a helical span at residues 187–207; that stretch reads IGLIIGVLVGAGLLLLLAVCI. Topologically, residues 208–670 are cytoplasmic; it reads CICCNRKKKK…RGSMKRNPQL (463 aa). Residue T301 is modified to Phosphothreonine. Residues 312–590 form the Protein kinase domain; the sequence is FAQSNLLGQG…VRALEGDMSM (279 aa). ATP is bound by residues 318–326 and K340; that span reads LGQGGFGYV. At Y385 the chain carries Phosphotyrosine. D436 acts as the Proton acceptor in catalysis. S469 bears the Phosphoserine mark. Residues T470 and T475 each carry the phosphothreonine modification. Y483 is modified (phosphotyrosine). Disordered stretches follow at residues 589–613 and 635–670; these read SMDD…VSSE and EYQS…NPQL. The segment covering 599–613 has biased composition (polar residues); sequence PGQSTYLSPGSVSSE.

This sequence belongs to the protein kinase superfamily. Ser/Thr protein kinase family. As to expression, mostly expressed in flower buds.

The protein resides in the cell membrane. It carries out the reaction L-seryl-[protein] + ATP = O-phospho-L-seryl-[protein] + ADP + H(+). The catalysed reaction is L-threonyl-[protein] + ATP = O-phospho-L-threonyl-[protein] + ADP + H(+). The protein is Proline-rich receptor-like protein kinase PERK5 (PERK5) of Arabidopsis thaliana (Mouse-ear cress).